Reading from the N-terminus, the 197-residue chain is Adenylyl-sulfate kinase (197 aa).

ATP is bound at residue 33-40; that stretch reads GLSGSGKS. The active-site Phosphoserine intermediate is the Ser107.

The protein belongs to the APS kinase family.

The catalysed reaction is adenosine 5'-phosphosulfate + ATP = 3'-phosphoadenylyl sulfate + ADP + H(+). The protein operates within sulfur metabolism; hydrogen sulfide biosynthesis; sulfite from sulfate: step 2/3. Its function is as follows. Catalyzes the synthesis of activated sulfate. The protein is Adenylyl-sulfate kinase of Bacillus licheniformis (strain ATCC 14580 / DSM 13 / JCM 2505 / CCUG 7422 / NBRC 12200 / NCIMB 9375 / NCTC 10341 / NRRL NRS-1264 / Gibson 46).